Here is a 555-residue protein sequence, read N- to C-terminus: Branched-chain-amino-acid aminotransferase-like protein 1 (555 aa).

This sequence belongs to the class-IV pyridoxal-phosphate-dependent aminotransferase family.

The sequence is that of Branched-chain-amino-acid aminotransferase-like protein 1 from Arabidopsis thaliana (Mouse-ear cress).